The sequence spans 215 residues: Vesicle-trafficking protein SEC22b (215 aa).

Topologically, residues 2–194 (VLLTMIARVA…KYLNMRSTYA (193 aa)) are cytoplasmic. The 114-residue stretch at 6 to 119 (MIARVADGLP…YSFIEFDTFI (114 aa)) folds into the Longin domain. Lysine 38 carries the N6-acetyllysine modification. One can recognise a v-SNARE coiled-coil homology domain in the interval 134–194 (NLGSINTELQ…KYLNMRSTYA (61 aa)). Serine 137 carries the phosphoserine modification. Threonine 140 is subject to Phosphothreonine. A phosphoserine mark is found at serine 164, serine 168, serine 174, and serine 177. A helical; Anchor for type IV membrane protein transmembrane segment spans residues 195–215 (KLAAVAVFFIMLIVYVRFWWL).

Belongs to the synaptobrevin family. In terms of assembly, interacts with STX17. Component of two distinct SNARE complexes consisting of STX5, GOSR2/BOS1, BET1 and SEC22B or STX18, USE1L, BNIP1/SEC20L and SEC22B. YKT6 can probably replace SEC22B in either complex. Interacts with the COPII Sec23/24 complex composed of SEC23A and SEC24A; recruits SEC22B into COPII-coated vesicles to allow its transport from the endoplasmic reticulum to the Golgi. Interacts with BET1.

The protein resides in the endoplasmic reticulum membrane. It is found in the endoplasmic reticulum-Golgi intermediate compartment membrane. Its subcellular location is the golgi apparatus. It localises to the cis-Golgi network membrane. The protein localises to the trans-Golgi network membrane. The protein resides in the melanosome. Its function is as follows. SNARE involved in targeting and fusion of ER-derived transport vesicles with the Golgi complex as well as Golgi-derived retrograde transport vesicles with the ER. The protein is Vesicle-trafficking protein SEC22b (SEC22B) of Homo sapiens (Human).